The following is a 117-amino-acid chain: Large ribosomal subunit protein bL20 (117 aa).

Belongs to the bacterial ribosomal protein bL20 family.

In terms of biological role, binds directly to 23S ribosomal RNA and is necessary for the in vitro assembly process of the 50S ribosomal subunit. It is not involved in the protein synthesizing functions of that subunit. This is Large ribosomal subunit protein bL20 from Glaesserella parasuis serovar 5 (strain SH0165) (Haemophilus parasuis).